Here is a 916-residue protein sequence, read N- to C-terminus: Neurofilament medium polypeptide (916 aa).

The segment covering 1-10 (MSYTLDSLGN) has biased composition (polar residues). A disordered region spans residues 1-51 (MSYTLDSLGNPSAYRRVTETRSSFSRVSGSPSSGFRSQSWSRGSPSTVSSS). Serine 2 is subject to N-acetylserine. The interval 2 to 104 (SYTLDSLGNP…KLSRSNEKEQ (103 aa)) is head. Low complexity predominate over residues 21–44 (RSSFSRVSGSPSSGFRSQSWSRGS). Serine 30 is modified (phosphoserine). Omega-N-methylarginine is present on arginine 42. Threonine 47 carries O-linked (GlcNAc) threonine glycosylation. Position 99 is a phosphoserine (serine 99). Positions 101–412 (EKEQLQGLND…KLLEGEETRF (312 aa)) constitute an IF rod domain. The tract at residues 105–136 (LQGLNDRFAGYIEKVHYLEQQNKEIEAEIQAL) is coil 1A. The linker 1 stretch occupies residues 137–149 (RQKQASHAQLGDA). The tract at residues 150-248 (YDQEIRELRA…EEEVADLLAQ (99 aa)) is coil 1B. A Phosphoserine modification is found at serine 226. The linker 12 stretch occupies residues 249–265 (IQASHITVERKDYLKTD). Residues 266–287 (ISTALKEIRSQLESHSDQNMHQ) are coil 2A. Residues 288-291 (AEEW) are linker 2. Residues 292–412 (FKCRYAKLTE…KLLEGEETRF (121 aa)) are coil 2B. Tyrosine 320 is modified (phosphotyrosine). Residues serine 346 and serine 418 each carry the phosphoserine modification. A tail region spans residues 413–916 (STFAGSITGP…AIVKEVTQSD (504 aa)). An O-linked (GlcNAc) threonine glycan is attached at threonine 431. Serine 467 and serine 483 each carry phosphoserine. The disordered stretch occupies residues 485–851 (KEEKKEAAEE…KKGGDKSEEK (367 aa)). Residues 493–505 (EEKEEEPEAEEEE) are compositionally biased toward acidic residues. At serine 511 the chain carries Phosphoserine. Positions 521–541 (KEEEGEKEEEEGQEEEEEEDE) are enriched in acidic residues. The segment covering 542–561 (GAKSDQAEEGGSEKEGSSEK) has biased composition (basic and acidic residues). 4 positions are modified to phosphoserine: serine 545, serine 553, serine 558, and serine 559. Residues 562 to 582 (EEGEQEEGETEAEAEGEEAEA) are compositionally biased toward acidic residues. Threonine 571 is subject to Phosphothreonine. A compositionally biased stretch (basic and acidic residues) spans 583 to 614 (KEEKKVEEKSEEVATKEELVADAKVEKPEKAK). 6 repeat units span residues 614–626 (KSPV…EEKG), 627–639 (KSPV…EEKG), 640–652 (KSPV…EEKG), 653–665 (KSPV…EEKG), 666–678 (KSPV…EEKA), and 679–691 (KSPV…EEAK). Positions 614 to 691 (KSPVPKSPVE…VPKSPVEEAK (78 aa)) are 6 X 13 AA approximate tandem repeats of K-S-P-V-[PS]-K-S-P-V-E-E-[KA]-[GAK]. Phosphoserine occurs at positions 641 and 646. Phosphoserine is present on residues serine 680 and serine 685. Basic and acidic residues-rich tracts occupy residues 686–701 (PVEE…KGEQ), 707–742 (KEVK…KEEA), and 755–778 (VHLE…EKAG). The residue at position 736 (serine 736) is a Phosphoserine. 3 positions are modified to phosphoserine: serine 783, serine 821, and serine 837. Residues 788-828 (SDKGAKGSRKEDIAVNGEVEGKEEVEQETKEKGSGREEEKG) show a composition bias toward basic and acidic residues. Basic and acidic residues predominate over residues 839 to 851 (ADEKKGGDKSEEK).

The protein belongs to the intermediate filament family. Forms heterodimers with NEFL; which can further hetero-oligomerize (in vitro). Forms heterodimers with INA (in vitro). There are a number of repeats of the tripeptide K-S-P, NFM is phosphorylated on a number of the serines in this motif. It is thought that phosphorylation of NFM results in the formation of interfilament cross bridges that are important in the maintenance of axonal caliber. In terms of processing, phosphorylation seems to play a major role in the functioning of the larger neurofilament polypeptides (NF-M and NF-H), the levels of phosphorylation being altered developmentally and coincidentally with a change in the neurofilament function. Post-translationally, phosphorylated in the head and rod regions by the PKC kinase PKN1, leading to the inhibition of polymerization.

It is found in the cytoplasm. Its subcellular location is the cytoskeleton. It localises to the cell projection. The protein localises to the axon. Functionally, neurofilaments usually contain three intermediate filament proteins: NEFL, NEFM, and NEFH which are involved in the maintenance of neuronal caliber. May additionally cooperate with the neuronal intermediate filament proteins PRPH and INA to form neuronal filamentous networks. The polypeptide is Neurofilament medium polypeptide (NEFM) (Homo sapiens (Human)).